We begin with the raw amino-acid sequence, 320 residues long: tRNA U34 carboxymethyltransferase (320 aa).

Carboxy-S-adenosyl-L-methionine is bound by residues K89, W103, K108, G128, 150–152 (DPT), 179–180 (IE), M194, Y198, and R313.

This sequence belongs to the class I-like SAM-binding methyltransferase superfamily. CmoB family. Homotetramer.

The enzyme catalyses carboxy-S-adenosyl-L-methionine + 5-hydroxyuridine(34) in tRNA = 5-carboxymethoxyuridine(34) in tRNA + S-adenosyl-L-homocysteine + H(+). Catalyzes carboxymethyl transfer from carboxy-S-adenosyl-L-methionine (Cx-SAM) to 5-hydroxyuridine (ho5U) to form 5-carboxymethoxyuridine (cmo5U) at position 34 in tRNAs. The protein is tRNA U34 carboxymethyltransferase of Actinobacillus pleuropneumoniae serotype 7 (strain AP76).